Reading from the N-terminus, the 2754-residue chain is Neurobeachin-like protein 2 (2754 aa).

Disordered stretches follow at residues 1298–1338 (TAGS…SEAP) and 1364–1438 (SVGS…QQTS). 2 stretches are compositionally biased toward pro residues: residues 1301-1323 (SPPP…PPTE) and 1388-1400 (TPSP…PFPA). Residues 1425–1437 (GDDTSNTSNPQQT) show a composition bias toward polar residues. Phosphoserine is present on S1647. Residue T1867 is modified to Phosphothreonine. Positions 1915–2040 (EQREKLVLSA…VRNQVYSWLL (126 aa)) constitute a BEACH-type PH domain. A BEACH domain is found at 2053 to 2345 (RSPQEMLRAS…QLLKEPHPTR (293 aa)). WD repeat units follow at residues 2386–2424 (LVLA…SWLP), 2448–2491 (RLLS…ALPR), 2494–2531 (LLSQ…VWRL), 2544–2582 (KPVQ…IHTV), 2589–2631 (AALR…TYSL), 2639–2674 (KLRA…ILQL), and 2682–2717 (PPLP…VVAG). Phosphoserine occurs at positions 2739 and 2742.

It belongs to the WD repeat neurobeachin family. As to expression, expressed in megakaryocytes.

The protein localises to the endoplasmic reticulum. Its function is as follows. Probably involved in thrombopoiesis. Plays a role in the development or secretion of alpha-granules, that contain several growth factors important for platelet biogenesis. The chain is Neurobeachin-like protein 2 (NBEAL2) from Homo sapiens (Human).